We begin with the raw amino-acid sequence, 419 residues long: Tetraspanning orphan receptor (419 aa).

The Cytoplasmic portion of the chain corresponds to 1–28; the sequence is MPRAPALLTNDARHQFTCCLCLHVRTGT. A helical transmembrane segment spans residues 29-49; sequence IIFGITQIIIQLVFISFLFLM. Topologically, residues 50-165 are extracellular; it reads TFNPRLIPED…EVKIKHFSPY (116 aa). Residues 166–186 traverse the membrane as a helical segment; it reads IAVCVTTFSLAFCCFMVHGAI. Residues 187-193 lie on the Cytoplasmic side of the membrane; it reads TKQPTHL. The chain crosses the membrane as a helical span at residues 194–214; that stretch reads LPFFFIQVFDLIICLIHILGF. Over 215-240 the chain is Extracellular; the sequence is MSSTSDLRLMIHTKTGPIYIKSTGFT. Residues 241 to 261 form a helical membrane-spanning segment; it reads FIILSISCMMLAFKAYCLGMV. Over 262–419 the chain is Cytoplasmic; sequence WDCYKYLMLN…SAPSNAHSSC (158 aa). The segment covering 303 to 316 has biased composition (low complexity); sequence NNSIGNSGSPNEPN. A disordered region spans residues 303–328; the sequence is NNSIGNSGSPNEPNTRPRPEPITYDP.

Interacts (via N-terminal extracellular domain) with human C2a. Post-translationally, phosphorylated on tyrosine residues.

It is found in the cell membrane. In terms of biological role, cell surface receptor that binds to human complement C2a protein. This results in inhibition of the classical and lectin pathways of complement activation, probably due to interference with binding of C2a to C4b and interference with cleavage by C1 or MASP2 such that C3 convertase cannot be formed. This infers resistance to complement-mediated cell lysis, allowing parasite survival and infection. This chain is Tetraspanning orphan receptor, found in Schistosoma mansoni (Blood fluke).